The chain runs to 116 residues: Large ribosomal subunit protein bL20 (116 aa).

This sequence belongs to the bacterial ribosomal protein bL20 family.

Binds directly to 23S ribosomal RNA and is necessary for the in vitro assembly process of the 50S ribosomal subunit. It is not involved in the protein synthesizing functions of that subunit. This chain is Large ribosomal subunit protein bL20 (rplT), found in Mycoplasmopsis fermentans (Mycoplasma fermentans).